Consider the following 143-residue polypeptide: MNKTITPSLETIERNWFLVDAKDKTLGRLATEIATVLRGKNKPTFTPHLDTGDFVIVVNAEKIEVSGKKASQKLYRRHSGRPGGMKTEKFESLQERIPERIIEQAVKGMLPHNSLGRQQFKKLKVYKGADHPHAAQNPVLLNS.

This sequence belongs to the universal ribosomal protein uL13 family. As to quaternary structure, part of the 50S ribosomal subunit.

Functionally, this protein is one of the early assembly proteins of the 50S ribosomal subunit, although it is not seen to bind rRNA by itself. It is important during the early stages of 50S assembly. In Prochlorococcus marinus (strain MIT 9312), this protein is Large ribosomal subunit protein uL13.